Here is a 219-residue protein sequence, read N- to C-terminus: Mucosal pentraxin (219 aa).

An N-terminal signal peptide occupies residues 1-19; sequence MEKLIVGTLLLTVLSGGIS. One can recognise a Pentraxin (PTX) domain in the interval 24–219; it reads DGKAFIFPQE…YVVTKPKLWT (196 aa). A disulfide bond links Cys55 and Cys114. The Ca(2+) site is built by Asp77, Asn78, Glu155, Gln156, Asp157, and Gln167.

This sequence belongs to the pentraxin family. Homopentamer. Pentraxin (or pentaxin) have a discoid arrangement of 5 non-covalently bound subunits. It depends on Ca(2+) as a cofactor. Expression is restricted to small intestine, stomach and colon. Within colon, expressed in epithelial cells located within the lower to mid region of transverse and distal crypts, but not in proximal colon.

The protein resides in the secreted. This is Mucosal pentraxin (Mptx1) from Rattus norvegicus (Rat).